The primary structure comprises 101 residues: Small ribosomal subunit protein uS14 (101 aa).

Positions 1-11 (MAKKSSVEKNN) are enriched in basic and acidic residues. Residues 1 to 22 (MAKKSSVEKNNRRQRMVKNAAA) are disordered. Over residues 12-22 (RRQRMVKNAAA) the composition is skewed to basic residues.

Belongs to the universal ribosomal protein uS14 family. Part of the 30S ribosomal subunit. Contacts proteins S3 and S10.

Binds 16S rRNA, required for the assembly of 30S particles and may also be responsible for determining the conformation of the 16S rRNA at the A site. The chain is Small ribosomal subunit protein uS14 from Afipia carboxidovorans (strain ATCC 49405 / DSM 1227 / KCTC 32145 / OM5) (Oligotropha carboxidovorans).